Consider the following 1293-residue polypeptide: Galactose/N-acetyl-D-galactosamine lectin heavy subunit 1 (1293 aa).

Residues M1 to A15 form the signal peptide. The Extracellular portion of the chain corresponds to D16–T1234. Residues N95, N198, N234, N261, N337, N377, N390, N468, N487, N643, N659, N890, N992, N1138, N1204, and N1214 are each glycosylated (N-linked (GlcNAc...) asparagine). A helical transmembrane segment spans residues T1235–F1255. The Cytoplasmic segment spans residues K1256–G1293.

As to quaternary structure, heterodimer composed of a 170 kDa heavy subunit (hgl) and a 31/35 kDa light subunit (lgl); disulfide-linked. Post-translationally, N-glycosylated.

It is found in the cell membrane. Functionally, lectin which binds galactose and N-acetyl-D-galactosamine of host glycoproteins and thus mediates adhesion to host cells. Mediates adherence to host colonic mucins, an essential step for pathogenic tissue invasion. The polypeptide is Galactose/N-acetyl-D-galactosamine lectin heavy subunit 1 (Entamoeba histolytica (strain ATCC 30459 / HM-1:IMSS / ABRM)).